We begin with the raw amino-acid sequence, 1113 residues long: Carbamoyl phosphate synthase large chain (1113 aa).

The interval 1 to 407 (MPKRSDINHV…ALNKALRSLE (407 aa)) is carboxyphosphate synthetic domain. 12 residues coordinate ATP: arginine 134, arginine 174, glycine 180, glycine 181, glutamate 213, isoleucine 215, glutamate 220, glycine 246, valine 247, histidine 248, glutamine 290, and glutamate 304. The 196-residue stretch at 138 to 333 (KDIVTTIGGE…IAKMAAKLAI (196 aa)) folds into the ATP-grasp 1 domain. 3 residues coordinate Mg(2+): glutamine 290, glutamate 304, and asparagine 306. The Mn(2+) site is built by glutamine 290, glutamate 304, and asparagine 306. The segment at 408-565 (TKQQGFWTKP…ELDPAAESEV (158 aa)) is oligomerization domain. Positions 566 to 967 (APQTEREKVL…AYAKAEAGAF (402 aa)) are carbamoyl phosphate synthetic domain. Residues 695 to 886 (GALLNREQLP…LAKAASRIAV (192 aa)) enclose the ATP-grasp 2 domain. Positions 731, 770, 772, 777, 802, 803, 804, 805, 845, and 857 each coordinate ATP. Glutamine 845, glutamate 857, and asparagine 859 together coordinate Mg(2+). Residues glutamine 845, glutamate 857, and asparagine 859 each coordinate Mn(2+). Residues 968–1113 (GALPTEGTVF…LQELDHAVKA (146 aa)) form the MGS-like domain. The tract at residues 968-1113 (GALPTEGTVF…LQELDHAVKA (146 aa)) is allosteric domain.

It belongs to the CarB family. Composed of two chains; the small (or glutamine) chain promotes the hydrolysis of glutamine to ammonia, which is used by the large (or ammonia) chain to synthesize carbamoyl phosphate. Tetramer of heterodimers (alpha,beta)4. Requires Mg(2+) as cofactor. The cofactor is Mn(2+).

It carries out the reaction hydrogencarbonate + L-glutamine + 2 ATP + H2O = carbamoyl phosphate + L-glutamate + 2 ADP + phosphate + 2 H(+). It catalyses the reaction hydrogencarbonate + NH4(+) + 2 ATP = carbamoyl phosphate + 2 ADP + phosphate + 2 H(+). Its pathway is amino-acid biosynthesis; L-arginine biosynthesis; carbamoyl phosphate from bicarbonate: step 1/1. It participates in pyrimidine metabolism; UMP biosynthesis via de novo pathway; (S)-dihydroorotate from bicarbonate: step 1/3. Functionally, large subunit of the glutamine-dependent carbamoyl phosphate synthetase (CPSase). CPSase catalyzes the formation of carbamoyl phosphate from the ammonia moiety of glutamine, carbonate, and phosphate donated by ATP, constituting the first step of 2 biosynthetic pathways, one leading to arginine and/or urea and the other to pyrimidine nucleotides. The large subunit (synthetase) binds the substrates ammonia (free or transferred from glutamine from the small subunit), hydrogencarbonate and ATP and carries out an ATP-coupled ligase reaction, activating hydrogencarbonate by forming carboxy phosphate which reacts with ammonia to form carbamoyl phosphate. This Corynebacterium glutamicum (strain ATCC 13032 / DSM 20300 / JCM 1318 / BCRC 11384 / CCUG 27702 / LMG 3730 / NBRC 12168 / NCIMB 10025 / NRRL B-2784 / 534) protein is Carbamoyl phosphate synthase large chain.